The chain runs to 739 residues: Elongation factor 2 (739 aa).

The 243-residue stretch at 19–261 (RNIRNIGIIA…MVALHVPDPI (243 aa)) folds into the tr-type G domain. GTP is bound by residues 28–35 (AHVDHGKT), 94–98 (DTPGH), and 148–151 (NKID). At His-603 the chain carries Diphthamide.

The protein belongs to the TRAFAC class translation factor GTPase superfamily. Classic translation factor GTPase family. EF-G/EF-2 subfamily.

It localises to the cytoplasm. Functionally, catalyzes the GTP-dependent ribosomal translocation step during translation elongation. During this step, the ribosome changes from the pre-translocational (PRE) to the post-translocational (POST) state as the newly formed A-site-bound peptidyl-tRNA and P-site-bound deacylated tRNA move to the P and E sites, respectively. Catalyzes the coordinated movement of the two tRNA molecules, the mRNA and conformational changes in the ribosome. This is Elongation factor 2 from Korarchaeum cryptofilum (strain OPF8).